Reading from the N-terminus, the 207-residue chain is Large ribosomal subunit protein uL4 (207 aa).

Positions His49–Ile78 are disordered.

The protein belongs to the universal ribosomal protein uL4 family. In terms of assembly, part of the 50S ribosomal subunit.

One of the primary rRNA binding proteins, this protein initially binds near the 5'-end of the 23S rRNA. It is important during the early stages of 50S assembly. It makes multiple contacts with different domains of the 23S rRNA in the assembled 50S subunit and ribosome. Functionally, forms part of the polypeptide exit tunnel. This Streptococcus gordonii (strain Challis / ATCC 35105 / BCRC 15272 / CH1 / DL1 / V288) protein is Large ribosomal subunit protein uL4.